A 148-amino-acid chain; its full sequence is Large ribosomal subunit protein bL9 (148 aa).

This sequence belongs to the bacterial ribosomal protein bL9 family.

Its function is as follows. Binds to the 23S rRNA. This is Large ribosomal subunit protein bL9 from Lachnoclostridium phytofermentans (strain ATCC 700394 / DSM 18823 / ISDg) (Clostridium phytofermentans).